Reading from the N-terminus, the 85-residue chain is Sec-independent protein translocase protein TatA (85 aa).

Residues 1 to 21 (MGSFSIWHWLIVLVIIMMVFG) form a helical membrane-spanning segment. Over residues 39–51 (FKDGMREGQEDKP) the composition is skewed to basic and acidic residues. A disordered region spans residues 39-85 (FKDGMREGQEDKPAGSQQPQQTAGQPPRELHDATTIDVEARDKSKQG). The span at 53-62 (GSQQPQQTAG) shows a compositional bias: polar residues. The segment covering 66 to 85 (RELHDATTIDVEARDKSKQG) has biased composition (basic and acidic residues).

This sequence belongs to the TatA/E family. In terms of assembly, the Tat system comprises two distinct complexes: a TatABC complex, containing multiple copies of TatA, TatB and TatC subunits, and a separate TatA complex, containing only TatA subunits. Substrates initially bind to the TatABC complex, which probably triggers association of the separate TatA complex to form the active translocon.

The protein localises to the cell inner membrane. Part of the twin-arginine translocation (Tat) system that transports large folded proteins containing a characteristic twin-arginine motif in their signal peptide across membranes. TatA could form the protein-conducting channel of the Tat system. This chain is Sec-independent protein translocase protein TatA, found in Ralstonia pickettii (strain 12J).